A 376-amino-acid chain; its full sequence is Putative phosphoserine aminotransferase (376 aa).

The segment at 1–30 (MADQLTPSLDIPAALKPRDGRFGSGPSKVR) is disordered. L-glutamate is bound at residue Arg-50. Residues 84 to 85 (AT), Phe-108, Thr-154, Asp-176, and Gln-199 each bind pyridoxal 5'-phosphate. At Lys-200 the chain carries N6-(pyridoxal phosphate)lysine. 251–252 (NT) contacts pyridoxal 5'-phosphate.

It belongs to the class-V pyridoxal-phosphate-dependent aminotransferase family. SerC subfamily. As to quaternary structure, homodimer. Pyridoxal 5'-phosphate is required as a cofactor.

The protein resides in the cytoplasm. It catalyses the reaction O-phospho-L-serine + 2-oxoglutarate = 3-phosphooxypyruvate + L-glutamate. It carries out the reaction 4-(phosphooxy)-L-threonine + 2-oxoglutarate = (R)-3-hydroxy-2-oxo-4-phosphooxybutanoate + L-glutamate. It functions in the pathway amino-acid biosynthesis; L-serine biosynthesis; L-serine from 3-phospho-D-glycerate: step 2/3. The protein operates within cofactor biosynthesis; pyridoxine 5'-phosphate biosynthesis; pyridoxine 5'-phosphate from D-erythrose 4-phosphate: step 3/5. Its function is as follows. Catalyzes the reversible conversion of 3-phosphohydroxypyruvate to phosphoserine and of 3-hydroxy-2-oxo-4-phosphonooxybutanoate to phosphohydroxythreonine. The protein is Putative phosphoserine aminotransferase of Mycobacterium leprae (strain TN).